The chain runs to 160 residues: Ribosomal RNA large subunit methyltransferase H (160 aa).

S-adenosyl-L-methionine-binding positions include Leu-77, Gly-109, and 128–133; that span reads FSRMTF.

Belongs to the RNA methyltransferase RlmH family. As to quaternary structure, homodimer.

Its subcellular location is the cytoplasm. It catalyses the reaction pseudouridine(1915) in 23S rRNA + S-adenosyl-L-methionine = N(3)-methylpseudouridine(1915) in 23S rRNA + S-adenosyl-L-homocysteine + H(+). In terms of biological role, specifically methylates the pseudouridine at position 1915 (m3Psi1915) in 23S rRNA. In Pelotomaculum thermopropionicum (strain DSM 13744 / JCM 10971 / SI), this protein is Ribosomal RNA large subunit methyltransferase H.